Consider the following 554-residue polypeptide: Glucose-6-phosphate isomerase (554 aa).

Glu359 acts as the Proton donor in catalysis. Residues His390 and Lys518 contribute to the active site.

This sequence belongs to the GPI family.

It localises to the cytoplasm. The enzyme catalyses alpha-D-glucose 6-phosphate = beta-D-fructose 6-phosphate. The protein operates within carbohydrate biosynthesis; gluconeogenesis. It participates in carbohydrate degradation; glycolysis; D-glyceraldehyde 3-phosphate and glycerone phosphate from D-glucose: step 2/4. In terms of biological role, catalyzes the reversible isomerization of glucose-6-phosphate to fructose-6-phosphate. The chain is Glucose-6-phosphate isomerase from Pseudomonas putida (strain ATCC 700007 / DSM 6899 / JCM 31910 / BCRC 17059 / LMG 24140 / F1).